A 465-amino-acid chain; its full sequence is Probable inactive receptor-like kinase BSK12 (465 aa).

Positions 1-12 (MGCCYSLSSTVD) are enriched in polar residues. Residues 1–34 (MGCCYSLSSTVDPVQDHTTDASSEPRNGGGEDPP) form a disordered region. The N-myristoyl glycine moiety is linked to residue glycine 2. Residues cysteine 3 and cysteine 4 are each lipidated (S-palmitoyl cysteine). Positions 50–291 (FSPENIVSDQ…KEIVATLETL (242 aa)) constitute a Protein kinase domain. Residues 56-64 (VSDQTSDVV) and lysine 78 each bind ATP.

This sequence belongs to the protein kinase superfamily. Ser/Thr protein kinase family. Interacts with YDA. In terms of processing, diacylation-mediated membrane association is essential for BSK12 function. As to expression, expressed at the mRNA level in the sperm cells in mature pollen, but the protein is only detectable in the zygote and the micropylar endosperm upon fertilization.

The protein resides in the cell membrane. Probable inactive protein kinase that activates the YODA MAP kinase cascade, which regulates the asymmetric first division and embryo polarity, by promoting the elongation of the zygote and the development of its basal daughter cell into the extra-embryonic suspensor. Acts as an adapter at the plasma membrane, possibly by recruiting and binding an activator. The polypeptide is Probable inactive receptor-like kinase BSK12 (Arabidopsis thaliana (Mouse-ear cress)).